A 169-amino-acid polypeptide reads, in one-letter code: MRALRAPVLVMGLVLLICTAAQSDASANKVEKTLRRIMEIMRQVENSADDESAQKTESAPEPKDTHHLKTASGETILEIFPRDLSRKEKFITILTGRRLSNPLRHQSCVFETSDLVVFHPSGPLYFGPKCKKDVYRLYHNTRDCTIPAHYKRCARLLTRLAGTRKCQEG.

The N-terminal stretch at 1-25 (MRALRAPVLVMGLVLLICTAAQSDA) is a signal peptide. The interval 45–68 (ENSADDESAQKTESAPEPKDTHHL) is disordered. The span at 52–67 (SAQKTESAPEPKDTHH) shows a compositional bias: basic and acidic residues. 2 disulfide bridges follow: Cys130–Cys166 and Cys144–Cys153.

Belongs to the ALKAL family. As to quaternary structure, homodimer. In terms of tissue distribution, expressed at high level in the notochord and iridophore stripes of the trunk, as well as in the eye and swim bladder.

The protein localises to the secreted. It is found in the cell membrane. Functionally, cytokine that acts as a physiological ligand for receptor tyrosine kinases LTK and ALK. Required for neural crest cell differentiation and iridophore development during embryonic iridophore development and adult stripe development by acting as a receptor for LTK. The protein is ALK and LTK ligand 2a of Danio rerio (Zebrafish).